Consider the following 204-residue polypeptide: Glycerol-3-phosphate acyltransferase (204 aa).

The next 5 membrane-spanning stretches (helical) occupy residues 8 to 28, 53 to 73, 81 to 101, 116 to 136, and 155 to 175; these read ILIF…CYIF, VPAA…VVIA, FITA…IFFG, FGFS…VAII, and VIFT…IIIL.

The protein belongs to the PlsY family. In terms of assembly, probably interacts with PlsX.

The protein resides in the cell inner membrane. It catalyses the reaction an acyl phosphate + sn-glycerol 3-phosphate = a 1-acyl-sn-glycero-3-phosphate + phosphate. Its pathway is lipid metabolism; phospholipid metabolism. Its function is as follows. Catalyzes the transfer of an acyl group from acyl-phosphate (acyl-PO(4)) to glycerol-3-phosphate (G3P) to form lysophosphatidic acid (LPA). This enzyme utilizes acyl-phosphate as fatty acyl donor, but not acyl-CoA or acyl-ACP. The polypeptide is Glycerol-3-phosphate acyltransferase (Francisella tularensis subsp. mediasiatica (strain FSC147)).